Consider the following 201-residue polypeptide: MFPEQQKEEFVSVWVRDPRIQKEDFWHSYIDYEICIHTNSMCFTMKTSCVRRRYREFVWLRQRLQSNALLVQLPELPSKNLFFNMNNRQHVDQRRQGLEDFLRKVLQNALLLSDSSLHLFLQSHLNSEDIEACVSGQTKYSVEEAIHKFALMNRRFPEEEEEGKKDADVEYDSESSSSGLGHSSDDSSSHGCKTSPALQES.

The segment at 8 to 125 is required for interaction with ATP6V1D; that stretch reads EEFVSVWVRD…SLHLFLQSHL (118 aa). The region spanning 10–127 is the PX domain; that stretch reads FVSVWVRDPR…HLFLQSHLNS (118 aa). Positions 53, 79, and 94 each coordinate a 1,2-diacyl-sn-glycero-3-phospho-(1D-myo-inositol-3-phosphate). The disordered stretch occupies residues 155 to 201; the sequence is RFPEEEEEGKKDADVEYDSESSSSGLGHSSDDSSSHGCKTSPALQES.

The protein belongs to the sorting nexin family. In terms of assembly, interacts with ATP6V1D; may play a role in ciliogenesis. Expressed in femur, calvariae and teeth.

It localises to the cytoplasm. The protein resides in the endosome membrane. It is found in the cytoskeleton. The protein localises to the microtubule organizing center. Its subcellular location is the centrosome. Functionally, probable phosphoinositide-binding protein involved in protein sorting and membrane trafficking in endosomes. Plays a role in cilium biogenesis through regulation of the transport and the localization of proteins to the cilium. Required for the localization to the cilium of V-ATPase subunit ATP6V1D and ATP6V0D1, and RAB8A. Involved in osteoclast differentiation and therefore bone resorption. This Mus musculus (Mouse) protein is Sorting nexin-10 (Snx10).